The sequence spans 147 residues: uncharacterized protein (147 aa).

A Rhodanese domain is found at 50–140; the sequence is NQKKAIIVDT…WNSENLPTTF (91 aa).

This is an uncharacterized protein from Buchnera aphidicola subsp. Schizaphis graminum (strain Sg).